The chain runs to 88 residues: Cell division topological specificity factor (88 aa).

The protein belongs to the MinE family.

Its function is as follows. Prevents the cell division inhibition by proteins MinC and MinD at internal division sites while permitting inhibition at polar sites. This ensures cell division at the proper site by restricting the formation of a division septum at the midpoint of the long axis of the cell. The protein is Cell division topological specificity factor of Escherichia coli (strain SMS-3-5 / SECEC).